Reading from the N-terminus, the 370-residue chain is Probable pectin lyase E (370 aa).

The cysteines at positions 75 and 96 are disulfide-linked. R245 is a catalytic residue. N-linked (GlcNAc...) asparagine glycosylation is present at N307. A disulfide bridge connects residues C311 and C319.

Belongs to the polysaccharide lyase 1 family.

It is found in the secreted. It catalyses the reaction Eliminative cleavage of (1-&gt;4)-alpha-D-galacturonan methyl ester to give oligosaccharides with 4-deoxy-6-O-methyl-alpha-D-galact-4-enuronosyl groups at their non-reducing ends.. Its function is as follows. Pectinolytic enzymes consist of four classes of enzymes: pectin lyase, polygalacturonase, pectin methylesterase and rhamnogalacturonase. Among pectinolytic enzymes, pectin lyase is the most important in depolymerization of pectin, since it cleaves internal glycosidic bonds of highly methylated pectins. The sequence is that of Probable pectin lyase E (pelE) from Aspergillus niger.